Consider the following 329-residue polypeptide: Lipoyl synthase (329 aa).

7 residues coordinate [4Fe-4S] cluster: Cys-72, Cys-77, Cys-83, Cys-98, Cys-102, Cys-105, and Ser-313. Residues 83-303 (CWSHGTATIM…QIGLKKGFFE (221 aa)) enclose the Radical SAM core domain.

The protein belongs to the radical SAM superfamily. Lipoyl synthase family. Requires [4Fe-4S] cluster as cofactor.

Its subcellular location is the cytoplasm. It catalyses the reaction [[Fe-S] cluster scaffold protein carrying a second [4Fe-4S](2+) cluster] + N(6)-octanoyl-L-lysyl-[protein] + 2 oxidized [2Fe-2S]-[ferredoxin] + 2 S-adenosyl-L-methionine + 4 H(+) = [[Fe-S] cluster scaffold protein] + N(6)-[(R)-dihydrolipoyl]-L-lysyl-[protein] + 4 Fe(3+) + 2 hydrogen sulfide + 2 5'-deoxyadenosine + 2 L-methionine + 2 reduced [2Fe-2S]-[ferredoxin]. It participates in protein modification; protein lipoylation via endogenous pathway; protein N(6)-(lipoyl)lysine from octanoyl-[acyl-carrier-protein]: step 2/2. In terms of biological role, catalyzes the radical-mediated insertion of two sulfur atoms into the C-6 and C-8 positions of the octanoyl moiety bound to the lipoyl domains of lipoate-dependent enzymes, thereby converting the octanoylated domains into lipoylated derivatives. In Legionella pneumophila (strain Corby), this protein is Lipoyl synthase.